We begin with the raw amino-acid sequence, 86 residues long: Toxin Td8 (86 aa).

The N-terminal stretch at 1–20 is a signal peptide; the sequence is MTRFVLFLSCFFLIGMVVEC. An LCN-type CS-alpha/beta domain is found at 21–83; that stretch reads KDGYLVGDDG…IWNSATNRCR (63 aa). Cystine bridges form between Cys-31–Cys-82, Cys-35–Cys-57, Cys-43–Cys-63, and Cys-47–Cys-65. Arg-83 carries the post-translational modification Arginine amide.

Expressed by the venom gland.

The protein resides in the secreted. Beta toxins bind voltage-independently at site-4 of sodium channels (Nav) and shift the voltage of activation toward more negative potentials thereby affecting sodium channel activation and promoting spontaneous and repetitive firing. This is Toxin Td8 from Tityus discrepans (Venezuelan scorpion).